A 260-amino-acid polypeptide reads, in one-letter code: uncharacterized protein (260 aa).

Positions 1–22 are cleaved as a signal peptide; that stretch reads MKHSKKLLLCISFLLITIFISG. C23 carries N-palmitoyl cysteine lipidation. Residue C23 is the site of S-diacylglycerol cysteine attachment.

It belongs to the staphylococcal tandem lipoprotein family.

Its subcellular location is the cell membrane. This is an uncharacterized protein from Staphylococcus epidermidis (strain ATCC 35984 / DSM 28319 / BCRC 17069 / CCUG 31568 / BM 3577 / RP62A).